The chain runs to 288 residues: Ribosomal protein L11 methyltransferase (288 aa).

Residues T134, G157, D179, and N224 each coordinate S-adenosyl-L-methionine.

The protein belongs to the methyltransferase superfamily. PrmA family.

The protein resides in the cytoplasm. It carries out the reaction L-lysyl-[protein] + 3 S-adenosyl-L-methionine = N(6),N(6),N(6)-trimethyl-L-lysyl-[protein] + 3 S-adenosyl-L-homocysteine + 3 H(+). In terms of biological role, methylates ribosomal protein L11. This chain is Ribosomal protein L11 methyltransferase, found in Caulobacter sp. (strain K31).